Here is a 486-residue protein sequence, read N- to C-terminus: Recombining binding protein suppressor of hairless (486 aa).

DNA-binding regions lie at residues 43 to 53 and 151 to 156; these read QKSYGNEKRFF and SKPSKK. At lysine 161 the chain carries N6-acetyllysine. Residues 178-183 form a DNA-binding region; the sequence is RLRSQT. The IPT/TIG domain occupies 341–431; sequence PVVESLQLNG…YSTSLTFTYT (91 aa). The segment covering 451–467 has biased composition (polar residues); the sequence is SSQVPPNESNTNSEGSY. Residues 451 to 486 are disordered; sequence SSQVPPNESNTNSEGSYTNASTNSTSVTSSTATVVS. A compositionally biased stretch (low complexity) spans 468–486; it reads TNASTNSTSVTSSTATVVS.

This sequence belongs to the Su(H) family. In terms of assembly, interacts with activated NOTCH1, NOTCH2 or NOTCH3. Interacts with MINT/SHARP. This interaction may mediate the recruitment of large corepressor complexes containing proteins such as HDAC1, HDAC2, NCOR2, SAP30, FHL1/KYOT2 and CIR1. Interacts with EP300, MAML1 and PTF1A. Interacts with RITA1, leading to nuclear export, prevent the interaction between RBPJ and NICD product and subsequent down-regulation of the Notch signaling pathway. Interacts with SNW1. Interacts with CHCHD2 and CXXC5. Interacts with BEND6 (via BEN domain). Interacts with NKAPL. Interacts with ZMIZ1. Interacts with RBM15. Interacts with L3MBTL3 and KDM1A; the interaction with KDM1A is weaker in the absence of L3MBTL3 and the interaction with L3MBTL3 is impaired by Notch-derived peptides containing the intracellular domain (NICD).

The protein localises to the nucleus. It localises to the cytoplasm. Its function is as follows. Transcriptional regulator that plays a central role in Notch signaling, a signaling pathway involved in cell-cell communication that regulates a broad spectrum of cell-fate determinations. Acts as a transcriptional repressor when it is not associated with Notch proteins. When associated with some NICD product of Notch proteins (Notch intracellular domain), it acts as a transcriptional activator that activates transcription of Notch target genes. Probably represses or activates transcription via the recruitment of chromatin remodeling complexes containing histone deacetylase or histone acetylase proteins, respectively. Specifically binds to the immunoglobulin kappa-type J segment recombination signal sequence. Binds specifically to methylated DNA. Binds to the oxygen responsive element of COX4I2 and activates its transcription under hypoxia conditions (4% oxygen). Negatively regulates the phagocyte oxidative burst in response to bacterial infection by repressing transcription of NADPH oxidase subunits. The chain is Recombining binding protein suppressor of hairless (RBPJ) from Pongo abelii (Sumatran orangutan).